Here is a 261-residue protein sequence, read N- to C-terminus: DNA repair protein RecO (261 aa).

It belongs to the RecO family.

Its function is as follows. Involved in DNA repair and RecF pathway recombination. In Mycobacteroides abscessus (strain ATCC 19977 / DSM 44196 / CCUG 20993 / CIP 104536 / JCM 13569 / NCTC 13031 / TMC 1543 / L948) (Mycobacterium abscessus), this protein is DNA repair protein RecO.